The sequence spans 221 residues: GDP-perosamine N-acetyltransferase (221 aa).

His-139 functions as the Proton acceptor in the catalytic mechanism.

The protein belongs to the transferase hexapeptide repeat family. Homotrimer.

The enzyme catalyses GDP-alpha-D-perosamine + acetyl-CoA = GDP-N-acetyl-alpha-D-perosamine + CoA + H(+). It functions in the pathway bacterial outer membrane biogenesis; LPS O-antigen biosynthesis. In terms of biological role, catalyzes the transfer of an acetyl residue from acetyl-CoA onto GDP-perosamine to form GDP-N-acetyl-perosamine. In Escherichia coli O157:H7, this protein is GDP-perosamine N-acetyltransferase.